We begin with the raw amino-acid sequence, 541 residues long: Nucleoporin NUP57 (541 aa).

Positions 1–13 (MFGFSGSNNGFGN) are enriched in low complexity. The tract at residues 1–261 (MFGFSGSNNG…STGSNLQQQQ (261 aa)) is disordered. FG repeat units lie at residues 2 to 3 (FG) and 11 to 12 (FG). The span at 19 to 36 (TGFSFGQNNNNTNTQPSA) shows a compositional bias: polar residues. FXFG repeat units lie at residues 21–24 (FSFG) and 39–42 (FGFG). 2 FG repeats span residues 56–57 (FG) and 65–66 (FG). Positions 58–72 (ANQATNTFGSNQQSS) are enriched in polar residues. Residues 76–79 (GLFG) form a GLFG 1 repeat. The segment covering 83–102 (ALGSLGSSSTTASGTTATGT) has biased composition (low complexity). GLFG repeat units follow at residues 103–106 (GLFG), 120–123 (GLFG), 132–135 (GLFG), and 147–150 (GLFG). A compositionally biased stretch (polar residues) spans 105 to 116 (FGQQTAQPQQST). The span at 125 to 146 (KPTTTTGGLFGNSAQNNSTTSG) shows a compositional bias: polar residues. Over residues 153-172 (VGSTGSLMGGNSTQNTSNMN) the composition is skewed to polar residues. 4 GLFG repeats span residues 175–178 (GLFG), 190–193 (GLFG), 204–207 (GLFG), and 220–223 (GLFG). Positions 228–257 (PQTNTAPGLGNTVSTQPSFAWSKPSTGSNL) are enriched in polar residues. A coiled-coil region spans residues 398–425 (ILKAQSRNVEIEKRILKLGTQLATLKNR).

It belongs to the nucleoporin GLFG family. As to quaternary structure, component of the nuclear pore complex (NPC). NPC constitutes the exclusive means of nucleocytoplasmic transport. NPCs allow the passive diffusion of ions and small molecules and the active, nuclear transport receptor-mediated bidirectional transport of macromolecules such as proteins, RNAs, ribonucleoparticles (RNPs), and ribosomal subunits across the nuclear envelope. Due to its 8-fold rotational symmetry, all subunits are present with 8 copies or multiples thereof. NUP57 is part of the NUP57 subcomplex (NIC96, NSP1, NUP49, NUP57) interacting with NUP49 and NSP1. Interacts through its FG repeats with karyopherins.

It is found in the nucleus. The protein resides in the nuclear pore complex. The protein localises to the nucleus membrane. Its function is as follows. Functions as a component of the nuclear pore complex (NPC). NPC components, collectively referred to as nucleoporins (NUPs), can play the role of both NPC structural components and of docking or interaction partners for transiently associated nuclear transport factors. Active directional transport is assured by both, a Phe-Gly (FG) repeat affinity gradient for these transport factors across the NPC and a transport cofactor concentration gradient across the nuclear envelope (GSP1 and GSP2 GTPases associated predominantly with GTP in the nucleus, with GDP in the cytoplasm). NUP57 plays an important role in several nuclear transport pathways including poly(A)+ RNA, tRNA, and pre-ribosome transport. This chain is Nucleoporin NUP57 (NUP57), found in Saccharomyces cerevisiae (strain ATCC 204508 / S288c) (Baker's yeast).